Reading from the N-terminus, the 344-residue chain is Ureide permease 3 (344 aa).

Residues 1-10 (MYVIESKGGT) are Extracellular-facing. Residues 11-31 (ITCMLLALLFLGTWPAIMTLT) traverse the membrane as a helical segment. At 32–42 (ERRGRLPQHTY) the chain is on the cytoplasmic side. The helical transmembrane segment at 43–63 (LDYTLTNLLAAVIIAFTLGEI) threads the bilayer. Topologically, residues 64–78 (SPSRPNFTTQLSQDN) are extracellular. A helical membrane pass occupies residues 79-99 (WPSVMFAMAGGIFLSLGTLAT). At 100 to 101 (QY) the chain is on the cytoplasmic side. Residues 102-122 (AWAFVGLSVTEVITASIAVVI) traverse the membrane as a helical segment. Topologically, residues 123–136 (GTTLNYFLDDRINR) are extracellular. The chain crosses the membrane as a helical span at residues 137-157 (AEVLFPGVACFLIAVCFGSAV). Topologically, residues 158–208 (HKSNAADNKSKLQGFKSLETTSSFQMETSSIKEGKAKVGTADFLIEVEKQR) are cytoplasmic. ATP is bound at residue 209-216 (AIKVFGKS). The chain crosses the membrane as a helical span at residues 209 to 229 (AIKVFGKSTIIGLAITFFAVP). Over 230–235 (KLNVYT) the chain is Extracellular. Residues 236–256 (AFFYFSISSFGVGLILNIIFL) form a helical membrane-spanning segment. Over 257–278 (YWPILGLPRSSFKAYLNDWNGR) the chain is Cytoplasmic. The helical transmembrane segment at 279–299 (GWSFLAGFLCGFGNGLQFMGG) threads the bilayer. Residues 300-344 (QAAGYAAAGAVQIENKHFGGYCCLENTKDHQEKHIHFLSVCYLCS) are Extracellular-facing.

Belongs to the plant ureide permease (TC 2.A.7.19) family.

Its subcellular location is the membrane. In terms of biological role, proton-coupled transporter that transports a wide spectrum of oxo derivatives of heterocyclic nitrogen compounds. The polypeptide is Ureide permease 3 (Arabidopsis thaliana (Mouse-ear cress)).